The sequence spans 192 residues: uncharacterized protein (192 aa).

In terms of domain architecture, Nudix hydrolase spans 29–160 (HRQAAVLIPI…PLDIYRRGDS (132 aa)). A Nudix box motif is present at residues 67-89 (GAVDDTDASVIAAALREAEEEVA). Glu-83 and Glu-87 together coordinate Mg(2+).

This sequence belongs to the Nudix hydrolase family. PCD1 subfamily. The cofactor is Mn(2+). Requires Mg(2+) as cofactor.

Probably mediates the hydrolysis of some nucleoside diphosphate derivatives. This is an uncharacterized protein from Escherichia coli (strain SMS-3-5 / SECEC).